We begin with the raw amino-acid sequence, 146 residues long: Hemoglobin subunit beta (146 aa).

The Globin domain maps to 2–146; it reads HWTAEEKQLI…VAHALARKYH (145 aa). Residues His63 and His92 each contribute to the heme b site.

This sequence belongs to the globin family. In terms of assembly, heterotetramer of two alpha chains and two beta chains. In terms of tissue distribution, red blood cells.

In terms of biological role, involved in oxygen transport from the lung to the various peripheral tissues. In Phalacrocorax carbo (Great cormorant), this protein is Hemoglobin subunit beta (HBB).